The sequence spans 457 residues: Protein PIN-LIKES 2 (457 aa).

Residues 1 to 15 (MSGFSSGNVNSRVVD) lie on the Lumenal side of the membrane. The helical transmembrane segment at 16–36 (ILSGVVPLLKLICLTVIGLLL) threads the bilayer. At 37 to 54 (AHPKTQLVPRATFRLLSK) the chain is on the cytoplasmic side. Residues 55–75 (LVFALFLPCLIFTELGESITL) traverse the membrane as a helical segment. Over 76–85 (DNIVQWWFIP) the chain is Lumenal. A helical transmembrane segment spans residues 86 to 106 (VNVLLSAVVGSLIGYLVVLIC). The Cytoplasmic segment spans residues 107–116 (RPPPEFNRFT). A helical membrane pass occupies residues 117–137 (IVMTAFGNTGNLLLAIVSSVC). Residues 138 to 151 (HTKTNPFGPNCNSR) are Lumenal-facing. Residues 152-172 (GVSYVSFAQWVAVILVYTVVY) form a helical membrane-spanning segment. Topologically, residues 173-291 (HMMEPPLEYY…PVKHILQPPT (119 aa)) are cytoplasmic. Residues 292–312 (IASLLAIIIGSVPQLKSVVFG) form a helical membrane-spanning segment. Over 313 to 322 (YDAPLSFITD) the chain is Lumenal. Residues 323-343 (SLNIMGSAMVPSVMLVLGGML) traverse the membrane as a helical segment. Residues 344–356 (SEGPNESTLGLRT) are Cytoplasmic-facing. The helical transmembrane segment at 357–377 (TIGISVARLLVLPLVGIGIVM) threads the bilayer. Over 378 to 393 (SADKLGLISSADPMFK) the chain is Lumenal. A helical membrane pass occupies residues 394 to 414 (FVLLLQYSTPSAILLGAIASL). The Cytoplasmic segment spans residues 415–424 (RGYAVREASA). Residues 425 to 445 (LLFWQHIFALLSLTFYIVIFF) traverse the membrane as a helical segment. The Lumenal segment spans residues 446–457 (KLTVETTVQGMQ).

Belongs to the auxin efflux carrier (TC 2.A.69.2) family. Expressed in seedlings, rosette and cauline leaves, flowers and siliques.

The protein localises to the endoplasmic reticulum membrane. Functionally, involved in cellular auxin homeostasis by regulating auxin metabolism. Regulates intracellular auxin accumulation at the endoplasmic reticulum and thus auxin availability for nuclear auxin signaling. This chain is Protein PIN-LIKES 2, found in Arabidopsis thaliana (Mouse-ear cress).